A 145-amino-acid polypeptide reads, in one-letter code: Large ribosomal subunit protein uL11 (145 aa).

Belongs to the universal ribosomal protein uL11 family. As to quaternary structure, part of the ribosomal stalk of the 50S ribosomal subunit. Interacts with L10 and the large rRNA to form the base of the stalk. L10 forms an elongated spine to which L12 dimers bind in a sequential fashion forming a multimeric L10(L12)X complex. Post-translationally, one or more lysine residues are methylated.

Forms part of the ribosomal stalk which helps the ribosome interact with GTP-bound translation factors. The polypeptide is Large ribosomal subunit protein uL11 (Rickettsia africae (strain ESF-5)).